A 258-amino-acid chain; its full sequence is Snake venom serine protease PTLE1 (258 aa).

The N-terminal stretch at 1 to 18 (MVLIRVLANLLILQLSYA) is a signal peptide. The propeptide occupies 19 to 24 (QKSSEL). Positions 25-249 (VIGGDECNIN…YTDWIENIIA (225 aa)) constitute a Peptidase S1 domain. Intrachain disulfides connect Cys31/Cys163, Cys50/Cys66, Cys98/Cys256, Cys142/Cys210, Cys174/Cys189, and Cys200/Cys225. N-linked (GlcNAc...) asparagine glycosylation occurs at Asn44. Catalysis depends on His65, which acts as the Charge relay system. Residues Asn79 and Asn103 are each glycosylated (N-linked (GlcNAc...) asparagine). Asp110 functions as the Charge relay system in the catalytic mechanism. Asn121 is a glycosylation site (N-linked (GlcNAc...) asparagine). Ser204 (charge relay system) is an active-site residue.

Belongs to the peptidase S1 family. Snake venom subfamily. As to quaternary structure, monomer. Expressed by the venom gland.

The protein localises to the secreted. Snake venom serine protease that may act in the hemostasis system of the prey. In Gloydius halys (Chinese water mocassin), this protein is Snake venom serine protease PTLE1.